The following is a 478-amino-acid chain: Zinc metalloproteinase/disintegrin ussurin (478 aa).

Residues 1–20 (MIQVLLVTICLAAFPYQGSS) form the signal peptide. The propeptide occupies 21–190 (IILESGNVND…KKASPLVVTT (170 aa)). The Peptidase M12B domain maps to 193-389 (RYVELVVVAD…RNPQCILNKP (197 aa)). Ca(2+) is bound by residues glutamate 196 and aspartate 280. Disulfide bonds link cysteine 304–cysteine 384, cysteine 344–cysteine 368, and cysteine 346–cysteine 351. Residue histidine 329 participates in Zn(2+) binding. Residue glutamate 330 is part of the active site. The Zn(2+) site is built by histidine 333 and histidine 339. Residues cysteine 384 and asparagine 387 each coordinate Ca(2+). Positions 390 to 413 (LRTDIVSTPVSGNELLEAGEECDC) are excised as a propeptide. Residues 397 to 478 (TPVSGNELLE…AGCPRNPFHA (82 aa)) form the Disintegrin domain. 6 disulfide bridges follow: cysteine 411–cysteine 426, cysteine 413–cysteine 421, cysteine 420–cysteine 443, cysteine 434–cysteine 440, cysteine 439–cysteine 464, and cysteine 452–cysteine 471. The Cell attachment site signature appears at 456–458 (RGD).

The protein belongs to the venom metalloproteinase (M12B) family. P-II subfamily. P-IIa sub-subfamily. As to quaternary structure, monomer. Requires Zn(2+) as cofactor. Expressed by the venom gland.

The protein resides in the secreted. In terms of biological role, impairs hemostasis in the envenomed animal. Functionally, inhibits platelet aggregation induced by ADP, thrombin, platelet-activating factor and collagen. Acts by inhibiting fibrinogen interaction with platelet receptors GPIIb/GPIIIa (ITGA2B/ITGB3). In Gloydius ussuriensis (Ussuri mamushi), this protein is Zinc metalloproteinase/disintegrin ussurin.